The primary structure comprises 213 residues: Holliday junction branch migration complex subunit RuvA (213 aa).

The segment at 1 to 64 (MIASVTGEVA…DEAPLLFGFA (64 aa)) is domain I. The segment at 65–143 (QGDEKEIFTV…LPEPPVQQAN (79 aa)) is domain II. Residues 144 to 152 (QPQVPVWRD) form a flexible linker region. The tract at residues 152–213 (DQVVDALTGL…GTTHAPTGRR (62 aa)) is domain III.

Belongs to the RuvA family. In terms of assembly, homotetramer. Forms an RuvA(8)-RuvB(12)-Holliday junction (HJ) complex. HJ DNA is sandwiched between 2 RuvA tetramers; dsDNA enters through RuvA and exits via RuvB. An RuvB hexamer assembles on each DNA strand where it exits the tetramer. Each RuvB hexamer is contacted by two RuvA subunits (via domain III) on 2 adjacent RuvB subunits; this complex drives branch migration. In the full resolvosome a probable DNA-RuvA(4)-RuvB(12)-RuvC(2) complex forms which resolves the HJ.

The protein localises to the cytoplasm. In terms of biological role, the RuvA-RuvB-RuvC complex processes Holliday junction (HJ) DNA during genetic recombination and DNA repair, while the RuvA-RuvB complex plays an important role in the rescue of blocked DNA replication forks via replication fork reversal (RFR). RuvA specifically binds to HJ cruciform DNA, conferring on it an open structure. The RuvB hexamer acts as an ATP-dependent pump, pulling dsDNA into and through the RuvAB complex. HJ branch migration allows RuvC to scan DNA until it finds its consensus sequence, where it cleaves and resolves the cruciform DNA. This chain is Holliday junction branch migration complex subunit RuvA, found in Kocuria rhizophila (strain ATCC 9341 / DSM 348 / NBRC 103217 / DC2201).